The chain runs to 442 residues: Glutamyl-tRNA reductase (442 aa).

Substrate-binding positions include 49–52, Ser109, 114–116, and Gln120; these read TCNR and EGQ. The active-site Nucleophile is Cys50. 198-203 provides a ligand contact to NADP(+); it reads GAGRMA. The segment at 420–442 is disordered; sequence MAAAQRLFDLPGDDADRDRSDAK. Over residues 433 to 442 the composition is skewed to basic and acidic residues; it reads DADRDRSDAK.

It belongs to the glutamyl-tRNA reductase family. In terms of assembly, homodimer.

The catalysed reaction is (S)-4-amino-5-oxopentanoate + tRNA(Glu) + NADP(+) = L-glutamyl-tRNA(Glu) + NADPH + H(+). Its pathway is porphyrin-containing compound metabolism; protoporphyrin-IX biosynthesis; 5-aminolevulinate from L-glutamyl-tRNA(Glu): step 1/2. It participates in porphyrin-containing compound metabolism; chlorophyll biosynthesis. In terms of biological role, catalyzes the NADPH-dependent reduction of glutamyl-tRNA(Glu) to glutamate 1-semialdehyde (GSA). This is Glutamyl-tRNA reductase from Synechococcus sp. (strain RCC307).